The chain runs to 310 residues: Coproporphyrin III ferrochelatase (310 aa).

Residues Tyr13, Arg30, 46-47 (RY), Ser54, and Tyr125 each bind Fe-coproporphyrin III. Residues His183 and Glu264 each contribute to the Fe(2+) site.

It belongs to the ferrochelatase family.

Its subcellular location is the cytoplasm. It catalyses the reaction Fe-coproporphyrin III + 2 H(+) = coproporphyrin III + Fe(2+). It functions in the pathway porphyrin-containing compound metabolism; protoheme biosynthesis. In terms of biological role, involved in coproporphyrin-dependent heme b biosynthesis. Catalyzes the insertion of ferrous iron into coproporphyrin III to form Fe-coproporphyrin III. The polypeptide is Coproporphyrin III ferrochelatase (Geobacillus sp. (strain WCH70)).